Consider the following 682-residue polypeptide: ATP-dependent DNA helicase RecG (682 aa).

The segment at 46-139 (ELRDLEEVKH…LKNGPHQEDK (94 aa)) is wedge domain. Residues 271–432 (DMSSPYRMNR…VFGEMDVSVI (162 aa)) form the Helicase ATP-binding domain. Residue 284 to 291 (GDVGSGKT) coordinates ATP. A DEAH box motif is present at residues 385-388 (DEQH). In terms of domain architecture, Helicase C-terminal spans 451–611 (MLDRILAFVE…GFELSEKDLE (161 aa)).

The protein belongs to the helicase family. RecG subfamily. As to quaternary structure, monomer. Interacts with SSB (sbbA), via the latter's 6 C-terminal residues. Colocalizes with DNA pol III subunit gamma/tau (dnaX).

It is found in the cytoplasm. It localises to the nucleoid. It catalyses the reaction Couples ATP hydrolysis with the unwinding of duplex DNA by translocating in the 3'-5' direction.. It carries out the reaction ATP + H2O = ADP + phosphate + H(+). Its activity is regulated as follows. Replication fork regression on Holliday junctions (HJ) is inhibited by DisA; DisA inhibits the ATPase activity of RecG. Critical role in recombination and DNA repair. Helps process Holliday junction intermediates to mature products by catalyzing branch migration. Has a DNA unwinding activity characteristic of a DNA helicase with 3'-5' polarity. Unwinds branched duplex DNA (Y-DNA), Holliday junction (HJ) DNA and partially replicated forks as well as catalyzing fork reversal/regression. Does not seem to unwind R-loops. Inhibits the diadenylate cyclase (DAC) activity of DisA in the presence but not absence of HJ DNA, possibly by relocating DisA from the junction. This Bacillus subtilis (strain 168) protein is ATP-dependent DNA helicase RecG.